The chain runs to 253 residues: Indole-3-glycerol phosphate synthase (253 aa).

Belongs to the TrpC family.

It carries out the reaction 1-(2-carboxyphenylamino)-1-deoxy-D-ribulose 5-phosphate + H(+) = (1S,2R)-1-C-(indol-3-yl)glycerol 3-phosphate + CO2 + H2O. It functions in the pathway amino-acid biosynthesis; L-tryptophan biosynthesis; L-tryptophan from chorismate: step 4/5. The polypeptide is Indole-3-glycerol phosphate synthase (Bacillus mycoides (strain KBAB4) (Bacillus weihenstephanensis)).